We begin with the raw amino-acid sequence, 663 residues long: Innate immunity activator protein (663 aa).

Positions 1-73 (MLQMPKLNEI…PGPGWDQCSP (73 aa)) are disordered. Over residues 23-47 (EGRWAGPTGPEAARPARGARGQARG) the composition is skewed to low complexity. Residues 50 to 59 (ARWDSWEHSR) are compositionally biased toward basic and acidic residues. Positions 117-147 (NAVRKQQRALEARLEACLEELRRLCLREAEL) form a coiled coil. A Nuclear localization signal (NLS) 1 motif is present at residues 164–170 (PKVRRRI). Disordered regions lie at residues 219-363 (RQRK…SSLW) and 375-405 (IRNV…QSLR). A compositionally biased stretch (basic and acidic residues) spans 225–246 (ALQEEKKLRDLQRCLGDRRRNS). A compositionally biased stretch (low complexity) spans 259–272 (ELSASDDSSLSDGL). The span at 282–298 (PKPPPESPAPPSRPLPP) shows a compositional bias: pro residues. The span at 327-340 (TSLDHPYEKPRKSS) shows a compositional bias: basic and acidic residues. A Nuclear localization signal (NLS) 2 motif is present at residues 332–338 (PYEKPRK). The segment covering 349–361 (PATTPQDQPNPSS) has biased composition (polar residues). The Nuclear localization signal (NLS) 3 signature appears at 422 to 428 (PRRRPTH). A disordered region spans residues 448–483 (PACHSCSEDSGSDVSSISHPTSPGSSSPDISFLRPL). Residues 455–475 (EDSGSDVSSISHPTSPGSSSP) are compositionally biased toward low complexity.

As to quaternary structure, interacts with IRAK1, NOD2 and RIPK2; the interaction takes place upon PRR stimulation. Interacts with YWHAQ/14-3-3T; the interaction increases upon PRR stimulation and is required for cellular signaling pathway activation and cytokine secretion. Interacts (via N-terminal domain) with CYTH1 and CYTH2 (via their N-terminal domains). Interacts with FBXW11 and BTRC; associates with SCF E3 ubiquitin-protein ligase complexes.

The protein localises to the nucleus. Its subcellular location is the cytoplasm. In terms of biological role, expressed in peripheral macrophages and intestinal myeloid-derived cells, is required for optimal PRR (pattern recognition receptor)-induced signaling, cytokine secretion, and bacterial clearance. Upon stimulation of a broad range of PRRs (pattern recognition receptor) such as NOD2 or TLR2, TLR3, TLR4, TLR5, TLR7 and TLR9, associates with YWHAQ/14-3-3T, which in turn leads to the recruitment and activation of MAP kinases and NF-kappa-B signaling complexes that amplifies PRR-induced downstream signals and cytokine secretion. In the intestine, regulates adherens junction stability by regulating the degradation of CYTH1 and CYTH2, probably acting as substrate cofactor for SCF E3 ubiquitin-protein ligase complexes. Stabilizes adherens junctions by limiting CYTH1-dependent ARF6 activation. This Mus musculus (Mouse) protein is Innate immunity activator protein.